The following is a 362-amino-acid chain: Biotin synthase (362 aa).

In terms of domain architecture, Radical SAM core spans 70 to 305; it reads CCGNVVDLCS…QQIIRYAGGR (236 aa). The [4Fe-4S] cluster site is built by cysteine 88, cysteine 92, and cysteine 95. Residues cysteine 133, cysteine 170, cysteine 230, and arginine 300 each contribute to the [2Fe-2S] cluster site.

It belongs to the radical SAM superfamily. Biotin synthase family. As to quaternary structure, homodimer. [4Fe-4S] cluster is required as a cofactor. The cofactor is [2Fe-2S] cluster.

It carries out the reaction (4R,5S)-dethiobiotin + (sulfur carrier)-SH + 2 reduced [2Fe-2S]-[ferredoxin] + 2 S-adenosyl-L-methionine = (sulfur carrier)-H + biotin + 2 5'-deoxyadenosine + 2 L-methionine + 2 oxidized [2Fe-2S]-[ferredoxin]. The protein operates within cofactor biosynthesis; biotin biosynthesis; biotin from 7,8-diaminononanoate: step 2/2. Its function is as follows. Catalyzes the conversion of dethiobiotin (DTB) to biotin by the insertion of a sulfur atom into dethiobiotin via a radical-based mechanism. In Synechocystis sp. (strain ATCC 27184 / PCC 6803 / Kazusa), this protein is Biotin synthase.